Here is a 252-residue protein sequence, read N- to C-terminus: Intraflagellar transport associated protein 2 (252 aa).

Residues 35 to 42 (GPPKAGKT) and 118 to 125 (WDVSGDKK) each bind GTP.

This sequence belongs to the small GTPase superfamily. Rab family. Component of the IFT complex B composed of at least che-2, che-13, dyf-1, dyf-3, dyf-6, dyf-11, dyf-13, ift-20, ift-74, ift-81, ifta-2, osm-1, osm-5 and osm-6. In terms of tissue distribution, ciliated sensory neurons.

It localises to the cytoplasm. The protein resides in the cytoskeleton. It is found in the cilium axoneme. In terms of biological role, component of the intraflagellar transport (IFT) complex B required for transport of proteins in the motile cilium. May be required for ciliary entrance and transport of specific ciliary cargo proteins such as che-3 which are related to motility. Regulates specific signaling activities in the cilia, such as the daf-2/insulin receptor-like transduction pathway. In Caenorhabditis elegans, this protein is Intraflagellar transport associated protein 2.